Reading from the N-terminus, the 364-residue chain is Chorismate synthase (364 aa).

NADP(+) is bound by residues R48 and R54. Residues 125–127, 238–239, G278, 293–297, and R319 contribute to the FMN site; these read RSS, NA, and KPTSS.

It belongs to the chorismate synthase family. Homotetramer. Requires FMNH2 as cofactor.

The catalysed reaction is 5-O-(1-carboxyvinyl)-3-phosphoshikimate = chorismate + phosphate. It functions in the pathway metabolic intermediate biosynthesis; chorismate biosynthesis; chorismate from D-erythrose 4-phosphate and phosphoenolpyruvate: step 7/7. Functionally, catalyzes the anti-1,4-elimination of the C-3 phosphate and the C-6 proR hydrogen from 5-enolpyruvylshikimate-3-phosphate (EPSP) to yield chorismate, which is the branch point compound that serves as the starting substrate for the three terminal pathways of aromatic amino acid biosynthesis. This reaction introduces a second double bond into the aromatic ring system. The polypeptide is Chorismate synthase (Shewanella loihica (strain ATCC BAA-1088 / PV-4)).